The chain runs to 1025 residues: Protein mono-ADP-ribosyltransferase PARP10 (1025 aa).

T101 carries the post-translational modification Phosphothreonine. The residue at position 106 (E106) is an ADP-ribosyl glutamic acid. K140 is modified (N6-(ADP-ribosyl)lysine). The segment at 318–346 (GIMTTGSGQEPGQSGTSLRTGPMGSLGQA) is disordered. The span at 321–336 (TTGSGQEPGQSGTSLR) shows a compositional bias: polar residues. 3 positions are modified to phosphoserine: S378, S423, and S431. 2 disordered regions span residues 569-589 (VLPG…DQED) and 617-644 (LEEE…APST). Acidic residues predominate over residues 617 to 639 (LEEEGPQEQPEEEVTPGHEEEEP). Short sequence motifs (ubiquitin-interacting) lie at residues 650–667 (LEEE…LEPQ) and 673–690 (QEEA…LLEQ). Position 663 is a phosphoserine (S663). The myc binding stretch occupies residues 700–907 (DGGTDGKAQL…CAHGFNRSFC (208 aa)). A PARP catalytic domain is found at 806 to 1025 (PTLAGQTLKG…SGLPGRSPDT (220 aa)). A PIP-box motif is present at residues 831-838 (QEVVRAFY). E882 bears the ADP-ribosyl glutamic acid mark. K916 carries the post-translational modification N6-(ADP-ribosyl)lysine. Position 916 is an N6-acetyllysine (K916). Residues 1006–1025 (HVPRASPDDPSGLPGRSPDT) form a disordered region. Position 1011 is a phosphoserine (S1011).

This sequence belongs to the ARTD/PARP family. Interacts with MYC. Interacts with PARP14. Interacts (via-PIP box and ubiquitin-interacting motifs) with PCNA. In terms of processing, stimulated through its phosphorylation by CDK2. Acquires CDK-dependent phosphorylation through late-G1 to S phase, and from prometaphase to cytokinesis in the nucleolar organizing regions. Phosphorylation is suppressed in growth-arrested cells. Post-translationally, auto-mono-ADP-ribosylated on glutamate and lysine residues. In terms of tissue distribution, highly expressed in spleen and thymus. Intermediate levels in liver, kidney, pancreas, prostate, testis, ovary, intestine, and leukocytes. Low expression in heart, brain, placenta, lung, skeletal muscle, and colon.

It localises to the nucleus. It is found in the nucleolus. The protein localises to the cytoplasm. It carries out the reaction L-lysyl-[protein] + NAD(+) = N(6)-(ADP-D-ribosyl)-L-lysyl-[protein] + nicotinamide + H(+). It catalyses the reaction L-aspartyl-[protein] + NAD(+) = 4-O-(ADP-D-ribosyl)-L-aspartyl-[protein] + nicotinamide. The catalysed reaction is L-glutamyl-[protein] + NAD(+) = 5-O-(ADP-D-ribosyl)-L-glutamyl-[protein] + nicotinamide. Its function is as follows. ADP-ribosyltransferase that mediates mono-ADP-ribosylation of glutamate and aspartate residues on target proteins. In contrast to PARP1 and PARP2, it is not able to mediate poly-ADP-ribosylation. Catalyzes mono-ADP-ribosylation of GSK3B, leading to negatively regulate GSK3B kinase activity. Involved in translesion DNA synthesis in response to DNA damage via its interaction with PCNA. The sequence is that of Protein mono-ADP-ribosyltransferase PARP10 from Homo sapiens (Human).